The primary structure comprises 408 residues: Retron Ec48 reverse transcriptase (408 aa).

The 227-residue stretch at 43-269 (EELKAIAELP…EPIKVHGLRV (227 aa)) folds into the Reverse transcriptase domain. Mg(2+)-binding residues include Asp-137, Asp-216, and Asp-217.

Belongs to the bacterial reverse transcriptase family.

It catalyses the reaction DNA(n) + a 2'-deoxyribonucleoside 5'-triphosphate = DNA(n+1) + diphosphate. In terms of biological role, reverse transcriptase (RT) component of antiviral defense system retron Ec48, composed of a non-coding RNA (ncRNA), this reverse transcriptase (RT) and the following membrane protein. Expression of this retron confers protection against bacteriophages lambda, T2, T4, T5 and T7. At multiplicity of infection (MOI) of 0.02 cultures grow normally when infected with lambda without collapsing, at MOI 2 cultures enter growth stasis. At MOI 3 cell membranes are permeabilized within 15 minutes of infection but do not lyse, suggesting the phage are not able to finish a replication cycle. Antiviral defense is suppressed by mutations that knockout the lambda gam expression or phage T7 gp5.9 expression; both viral genes inhibit host RecBCD. The Ec48 retron may sense the integrity of the RecBCD enzyme; when RecBCD is perturbed by viral proteins the Ec48 effector (the membrane protein) is activated, leading to abortive infection and bacterial growth arrest. Responsible for synthesis of msDNA-Ec48 (a branched molecule with RNA linked by a 2',5'-phosphodiester bond to ssDNA). The retron transcript serves as primer (from a conserved internal G residue) and template for the reaction, and codes for the RT. In Escherichia coli, this protein is Retron Ec48 reverse transcriptase.